Reading from the N-terminus, the 490-residue chain is Betaine aldehyde dehydrogenase (490 aa).

Positions 26, 27, and 93 each coordinate K(+). Residue 150–152 (GAW) participates in NAD(+) binding. Residue lysine 162 is the Charge relay system of the active site. 176 to 179 (KPSE) lines the NAD(+) pocket. Valine 180 contacts K(+). Position 230 to 233 (230 to 233 (GTST)) interacts with NAD(+). Leucine 246 serves as a coordination point for K(+). Glutamate 252 serves as the catalytic Proton acceptor. 3 residues coordinate NAD(+): glycine 254, cysteine 286, and glutamate 387. The active-site Nucleophile is the cysteine 286. Cysteine 286 is subject to Cysteine sulfenic acid (-SOH). Positions 457 and 460 each coordinate K(+). The Charge relay system role is filled by glutamate 464.

The protein belongs to the aldehyde dehydrogenase family. Dimer of dimers. K(+) serves as cofactor.

It catalyses the reaction betaine aldehyde + NAD(+) + H2O = glycine betaine + NADH + 2 H(+). It participates in amine and polyamine biosynthesis; betaine biosynthesis via choline pathway; betaine from betaine aldehyde: step 1/1. Its function is as follows. Involved in the biosynthesis of the osmoprotectant glycine betaine. Catalyzes the irreversible oxidation of betaine aldehyde to the corresponding acid. This Pseudomonas aeruginosa (strain UCBPP-PA14) protein is Betaine aldehyde dehydrogenase.